Reading from the N-terminus, the 366-residue chain is Methylthioribose-1-phosphate isomerase (366 aa).

Residues 53–55 (RGA), Arg90, and Gln203 each bind substrate. The active-site Proton donor is the Asp244. Residue 254 to 255 (NK) participates in substrate binding.

The protein belongs to the eIF-2B alpha/beta/delta subunits family. MtnA subfamily.

The catalysed reaction is 5-(methylsulfanyl)-alpha-D-ribose 1-phosphate = 5-(methylsulfanyl)-D-ribulose 1-phosphate. It participates in amino-acid biosynthesis; L-methionine biosynthesis via salvage pathway; L-methionine from S-methyl-5-thio-alpha-D-ribose 1-phosphate: step 1/6. Catalyzes the interconversion of methylthioribose-1-phosphate (MTR-1-P) into methylthioribulose-1-phosphate (MTRu-1-P). This chain is Methylthioribose-1-phosphate isomerase, found in Methylocella silvestris (strain DSM 15510 / CIP 108128 / LMG 27833 / NCIMB 13906 / BL2).